A 1157-amino-acid polypeptide reads, in one-letter code: Endo-1,4-beta-xylanase A (1157 aa).

Positions 1–33 (MMKNNVDRIVSIVTALIMIFGASLFSPPIRVFA) are cleaved as a signal peptide. CBM-cenC domains follow at residues 38 to 189 (INLV…VTTQ) and 195 to 343 (GNVI…VIGE). The GH10 domain occupies 352 to 675 (QNDIPDLYSV…KPAFWAVVDP (324 aa)). The active-site Proton donor is the E495. Residue D537 is part of the active site. The Nucleophile role is filled by E600. SLH domains follow at residues 1051-1114 (KKGV…YSGE) and 1115-1157 (FSDV…EMTQ).

It belongs to the glycosyl hydrolase 10 (cellulase F) family.

The catalysed reaction is Endohydrolysis of (1-&gt;4)-beta-D-xylosidic linkages in xylans.. It functions in the pathway glycan degradation; xylan degradation. Endo-acting enzyme that randomly cleaves the internal xylosidic linkages of the xylan backbone, yielding xylooligosaccharides of various lengths which are further hydrolyzed to xylose molecules by beta-xylosidase (EC 3.2.1.37). Requires at least three xylose residues for catalytic activity. Does not have activity against xylobiose. The protein is Endo-1,4-beta-xylanase A (xynA) of Thermoanaerobacterium saccharolyticum.